Consider the following 513-residue polypeptide: Na(+)/H(+) antiporter NhaB (513 aa).

A run of 11 helical transmembrane segments spans residues 23-43 (LALI…PFVA), 52-72 (IFTL…LLAI), 97-117 (LLLM…LFIF), 144-164 (FLDA…FYGI), 202-222 (LMMH…VGEP), 238-258 (FFLR…LTCL), 303-323 (AIIG…VGLI), 348-368 (TESL…AVII), 391-411 (LFYI…VGTI), 447-467 (ATPN…APLI), and 475-495 (VWMA…CVEF).

Belongs to the NhaB Na(+)/H(+) (TC 2.A.34) antiporter family.

It localises to the cell inner membrane. It catalyses the reaction 2 Na(+)(in) + 3 H(+)(out) = 2 Na(+)(out) + 3 H(+)(in). In terms of biological role, na(+)/H(+) antiporter that extrudes sodium in exchange for external protons. This is Na(+)/H(+) antiporter NhaB from Escherichia coli (strain SMS-3-5 / SECEC).